Reading from the N-terminus, the 240-residue chain is Uridylate kinase (240 aa).

ATP is bound at residue 14–17 (KLSG). UMP is bound at residue glycine 56. Residues glycine 57 and arginine 61 each coordinate ATP. Residues aspartate 76 and 137–144 (TGNPFFTT) each bind UMP. ATP contacts are provided by threonine 164, tyrosine 170, and aspartate 173.

The protein belongs to the UMP kinase family. In terms of assembly, homohexamer.

It is found in the cytoplasm. The enzyme catalyses UMP + ATP = UDP + ADP. It functions in the pathway pyrimidine metabolism; CTP biosynthesis via de novo pathway; UDP from UMP (UMPK route): step 1/1. With respect to regulation, inhibited by UTP. Catalyzes the reversible phosphorylation of UMP to UDP. The protein is Uridylate kinase of Verminephrobacter eiseniae (strain EF01-2).